The following is a 470-amino-acid chain: Cell division protein FtsA (470 aa).

Residues 416–470 (NKKDTHENEVESTDEEIYQSEDNHQEHKQNHEHVQDKDKDKEESKFKKLMKSLFE) are disordered. A compositionally biased stretch (acidic residues) spans 425–434 (VESTDEEIYQ). Over residues 436-461 (EDNHQEHKQNHEHVQDKDKDKEESKF) the composition is skewed to basic and acidic residues.

Belongs to the FtsA/MreB family. As to quaternary structure, self-interacts. Interacts with FtsZ.

The protein localises to the cell membrane. Functionally, cell division protein that is involved in the assembly of the Z ring. May serve as a membrane anchor for the Z ring. The chain is Cell division protein FtsA from Staphylococcus aureus (strain NCTC 8325 / PS 47).